A 193-amino-acid polypeptide reads, in one-letter code: dCTP deaminase (193 aa).

Residues 110 to 115 (RSSLAR), aspartate 128, 136 to 138 (VLE), tyrosine 171, lysine 178, and glutamine 182 each bind dCTP. Glutamate 138 serves as the catalytic Proton donor/acceptor. Residues 169-193 (RPYNRRQDAKYRDQQGAVASRIDKD) form a disordered region.

The protein belongs to the dCTP deaminase family. In terms of assembly, homotrimer.

It carries out the reaction dCTP + H2O + H(+) = dUTP + NH4(+). Its pathway is pyrimidine metabolism; dUMP biosynthesis; dUMP from dCTP (dUTP route): step 1/2. In terms of biological role, catalyzes the deamination of dCTP to dUTP. The chain is dCTP deaminase from Cronobacter sakazakii (strain ATCC BAA-894) (Enterobacter sakazakii).